The following is a 416-amino-acid chain: MFDRKLTLDKVDPDLWAAIQKEDERQEQHIELIASENYASPAVMQAQGTQLTNKYAEGYPGKRYYGGCEYVDIVEQLAIDRLKELFGAEAANVQPNSGSQANQGVYMAVLKPGDTVLGMSLAEGGHLTHGASVNASGKLYNFLSYGLDENEVLNYAQVEALAREHKPKLIVAGASAYALHIDFERMARIARENGALFMVDIAHYAGLVAGGQYPNPVPHADFVTSTTHKSLRGPRGGVIMMKAQHEKAVNSAIFPGIQGGPLEHVIAAKAVAFKEALSPEFKDYASQVVKNAKVLAETLVKRGLRIVSGRTESHVMLVDLRAKGITGKEAEAVLGKAHITVNKNAIPNDPEKPFVTSGIRLGTPAMTTRGFKEAEAELTGNLIADVLENPHDEANIAAVRAKVNELTSRLPVYSAK.

(6S)-5,6,7,8-tetrahydrofolate contacts are provided by residues L121 and 125–127 (GHL). K229 carries the post-translational modification N6-(pyridoxal phosphate)lysine.

It belongs to the SHMT family. In terms of assembly, homodimer. It depends on pyridoxal 5'-phosphate as a cofactor.

It localises to the cytoplasm. It catalyses the reaction (6R)-5,10-methylene-5,6,7,8-tetrahydrofolate + glycine + H2O = (6S)-5,6,7,8-tetrahydrofolate + L-serine. It participates in one-carbon metabolism; tetrahydrofolate interconversion. It functions in the pathway amino-acid biosynthesis; glycine biosynthesis; glycine from L-serine: step 1/1. Catalyzes the reversible interconversion of serine and glycine with tetrahydrofolate (THF) serving as the one-carbon carrier. This reaction serves as the major source of one-carbon groups required for the biosynthesis of purines, thymidylate, methionine, and other important biomolecules. Also exhibits THF-independent aldolase activity toward beta-hydroxyamino acids, producing glycine and aldehydes, via a retro-aldol mechanism. This Bordetella avium (strain 197N) protein is Serine hydroxymethyltransferase.